Consider the following 196-residue polypeptide: Transmembrane protein 126A (196 aa).

At 1–34 the chain is on the mitochondrial matrix side; the sequence is MESHKPSTSKDDLILNIISRKIKQLPESDRNLLE. Residues 35–55 traverse the membrane as a helical segment; it reads YGSAYIGLNAAFGGLIANSLF. At 56–57 the chain is on the mitochondrial intermembrane side; the sequence is RR. Residues 58 to 78 traverse the membrane as a helical segment; sequence ILNVTQARLASSLPMAVIPFL. Residues 79-106 are Mitochondrial matrix-facing; it reads TANLSYQSLVSLPLSTGDLNCETCTTTR. A helical transmembrane segment spans residues 107–127; it reads GALVGLVMGGLYPILLAIPVN. At 128-159 the chain is on the mitochondrial intermembrane side; it reads GGLAARYESSPLPQRGNIFNYWITVSKPVFRK. The helical transmembrane segment at 160–176 threads the bilayer; it reads MLFPTLLQTVFASYLGS. At 177 to 196 the chain is on the mitochondrial matrix side; the sequence is RQYKLLIKALQLPEPDLEIH.

This sequence belongs to the TMEM126 family. Interacts with OXA1L; promoting cotranslational quality control in mitochondria. As to expression, in the retina, significant levels of expression are detected in the ganglion cell layer, the optic nerve head, the outer plexiform layer, and in the outer ellipsoide length of photoreceptor inner segments.

It localises to the mitochondrion inner membrane. Functionally, protein required for the cotranslational protein quality control in the inner membrane of the mitochondria. Associates with newly synthesized polypeptides and may act as a chaperone that cooperates with OXA1L for the insertion of newly synthesized mitochondrial proteins into the inner membrane. Required for the assembly of the ND4 module of mitochondrial complex I. The polypeptide is Transmembrane protein 126A (Mus musculus (Mouse)).